A 766-amino-acid chain; its full sequence is General transcription and DNA repair factor IIH helicase/translocase subunit XPB2 (766 aa).

The tract at residues 1-56 is disordered; it reads MGNDERKRPTKKMKYGGKDDQKMKNIQNVEDYYDDADEDSRDGEGEEKRRDFTDLE. Acidic residues predominate over residues 31–41; sequence DYYDDADEDSR. Basic and acidic residues predominate over residues 42 to 56; that stretch reads DGEGEEKRRDFTDLE. Residues 293–455 form the Helicase ATP-binding domain; the sequence is MFGNGRARSG…DLNFLIGPKL (163 aa). 306 to 313 contributes to the ATP binding site; the sequence is LPCGAGKS. Positions 408 to 411 match the DEVH box motif; it reads DEVH. In terms of domain architecture, Helicase C-terminal spans 510 to 676; it reads RACEFLIRFH…SLPPPDAGSS (167 aa). Positions 739-748 are enriched in polar residues; sequence SGRQKSGNQS. A disordered region spans residues 739–766; it reads SGRQKSGNQSKKPKDPTKRHNIFKKRYV. A Nuclear localization signal motif is present at residues 749–765; it reads KKPKDPTKRHNIFKKRY. Residues 757–766 are compositionally biased toward basic residues; that stretch reads RHNIFKKRYV.

Belongs to the helicase family. RAD25/XPB subfamily. In terms of assembly, component of the 7-subunit TFIIH core complex composed of XPB, XPD, TFB1/GTF2H1, GTF2H2/P44, TFB4/GTF2H3, TFB2/GTF2H4 and TFB5/GTF2H5, which is active in NER. The core complex associates with the 3-subunit CDK-activating kinase (CAK) module composed of CYCH1/cyclin H1, CDKD and MAT1/At4g30820 to form the 10-subunit holoenzyme (holo-TFIIH) active in transcription. Expressed ubiquitously.

Its subcellular location is the nucleus. It catalyses the reaction Couples ATP hydrolysis with the unwinding of duplex DNA by translocating in the 3'-5' direction.. The catalysed reaction is ATP + H2O = ADP + phosphate + H(+). In terms of biological role, ATP-dependent 3'-5' DNA helicase/translocase; binds dsDNA rather than ssDNA, unzipping it in a translocase rather than classical helicase activity. Component of the general transcription and DNA repair factor IIH (TFIIH) core complex. When complexed to CDK-activating kinase (CAK), involved in RNA transcription by RNA polymerase II. The ATPase activity of XPB/ERCC3, but not its helicase activity, is required for DNA opening; it may wrap around the damaged DNA wedging it open, causing localized melting and twisting that allows XPD/ERCC2 helicase to anchor. The ATP-dependent helicase activity of XPB/ERCC3 may be required for promoter escape. Also involved in transcription-coupled nucleotide excision repair (NER) of damaged DNA. In NER, TFIIH acts by opening DNA around the lesion to allow the excision of the damaged oligonucleotide and its replacement by a new DNA fragment. The structure of the TFIIH transcription complex differs from the NER-TFIIH complex. Partially complements UV sensitivity of a yeast SSL2 mutation. The protein is General transcription and DNA repair factor IIH helicase/translocase subunit XPB2 (XPB2) of Arabidopsis thaliana (Mouse-ear cress).